A 443-amino-acid chain; its full sequence is Tol-Pal system protein TolB (443 aa).

The signal sequence occupies residues 1-31 (MTRLAKGKWRSTLGAMMALAVMVAAIPQARA). Polar residues predominate over residues 423–432 (NERQISTPTE). Residues 423–443 (NERQISTPTEASDPAWSPLLP) form a disordered region.

The protein belongs to the TolB family. In terms of assembly, the Tol-Pal system is composed of five core proteins: the inner membrane proteins TolA, TolQ and TolR, the periplasmic protein TolB and the outer membrane protein Pal. They form a network linking the inner and outer membranes and the peptidoglycan layer.

The protein localises to the periplasm. In terms of biological role, part of the Tol-Pal system, which plays a role in outer membrane invagination during cell division and is important for maintaining outer membrane integrity. This is Tol-Pal system protein TolB from Rhodospirillum rubrum (strain ATCC 11170 / ATH 1.1.1 / DSM 467 / LMG 4362 / NCIMB 8255 / S1).